We begin with the raw amino-acid sequence, 302 residues long: Taste receptor type 2 member 104 (302 aa).

The Extracellular segment spans residues 1–7; sequence MLSALES. Residues 8–28 traverse the membrane as a helical segment; the sequence is ILLSVATSEAMLGVLGNTFIV. Residues 29-43 lie on the Cytoplasmic side of the membrane; that stretch reads LVNYTDWVRNKKLSK. A helical transmembrane segment spans residues 44 to 64; the sequence is INFILTGLAISRIFTIWIITL. Topologically, residues 65–87 are extracellular; that stretch reads DAYTKVFLLTMLMPSSLHECMSY. The helical transmembrane segment at 88–108 threads the bilayer; sequence IWVIINHLSVWFSTSLGIFYF. Topologically, residues 109–128 are cytoplasmic; it reads LKIANFSHYIFLWMKRRADK. The chain crosses the membrane as a helical span at residues 129 to 149; it reads VFVFLIVFLIITWLASFPLAV. Topologically, residues 150–182 are extracellular; it reads KVIKDVKIYQSNTSWLIHLEKSELLINYVFANM. N-linked (GlcNAc...) asparagine glycosylation occurs at asparagine 161. Residues 183-203 traverse the membrane as a helical segment; sequence GPISLFIVAIIACFLLTISLW. At 204–229 the chain is on the cytoplasmic side; the sequence is RHSRQMQSIGSGFRDLNTEAHMKAMK. The chain crosses the membrane as a helical span at residues 230–250; that stretch reads VLIAFIILFILYFLGILIETL. At 251-259 the chain is on the extracellular side; sequence CLFLTNNKL. A helical transmembrane segment spans residues 260–280; the sequence is LFIFGFTLSAMYPCCHSFILI. At 281–302 the chain is on the cytoplasmic side; the sequence is LTSRELKQATMRALQRLKCCET.

It belongs to the G-protein coupled receptor T2R family.

It localises to the membrane. In terms of biological role, putative taste receptor which may play a role in the perception of bitterness. The protein is Taste receptor type 2 member 104 of Mus musculus (Mouse).